Here is a 271-residue protein sequence, read N- to C-terminus: Phosphatidylinositol transfer protein beta isoform (271 aa).

The residue at position 215 (K215) is an N6-acetyllysine. A Phosphoserine modification is found at S262.

This sequence belongs to the PtdIns transfer protein family. PI transfer class I subfamily. In terms of processing, constitutive phosphorylation of Ser-262 has no effect on phospholipid transfer activity but is required for Golgi targeting. In terms of tissue distribution, expressed abundantly in brain, kidney, liver, and lung, but in a lesser amount in testis.

It is found in the golgi apparatus. The protein localises to the golgi apparatus membrane. It localises to the endoplasmic reticulum membrane. It carries out the reaction a 1,2-diacyl-sn-glycero-3-phosphocholine(in) = a 1,2-diacyl-sn-glycero-3-phosphocholine(out). It catalyses the reaction a 1,2-diacyl-sn-glycero-3-phospho-(1D-myo-inositol)(in) = a 1,2-diacyl-sn-glycero-3-phospho-(1D-myo-inositol)(out). The enzyme catalyses an N-(acyl)-sphingosylphosphocholine(in) = an N-(acyl)-sphingosylphosphocholine(out). Its activity is regulated as follows. Phosphatidylinositol transfer activity is inhibited by N-ethylmaleimide. Catalyzes the transfer of phosphatidylinositol between membranes. Also catalyzes the transfer of phosphatidylcholine and sphingomyelin between membranes. Required for COPI-mediated retrograde transport from the Golgi to the endoplasmic reticulum; phosphatidylinositol and phosphatidylcholine transfer activity is essential for this function. The sequence is that of Phosphatidylinositol transfer protein beta isoform (Pitpnb) from Rattus norvegicus (Rat).